The sequence spans 181 residues: Probable N-acetyltransferase YjcK (181 aa).

One can recognise an N-acetyltransferase domain in the interval 7 to 172 (IYVRPLEVTD…NGVWEDHQVL (166 aa)).

This sequence belongs to the acetyltransferase family. RimJ subfamily.

It carries out the reaction an N-terminal L-alpha-aminoacyl-[protein] + acetyl-CoA = N-terminal N(alpha)-acetyl-L-alpha-aminoacyl-[protein] + CoA + H(+). Functionally, probable N-terminal protein acetyltransferase. This Bacillus subtilis (strain 168) protein is Probable N-acetyltransferase YjcK (yjcK).